Consider the following 143-residue polypeptide: FAD synthase (143 aa).

ATP-binding positions include 9–10, 14–17, and D92; these read TF and HPGH.

The protein belongs to the archaeal FAD synthase family. Homodimer. A divalent metal cation is required as a cofactor.

It catalyses the reaction FMN + ATP + H(+) = FAD + diphosphate. The protein operates within cofactor biosynthesis; FAD biosynthesis; FAD from FMN: step 1/1. Catalyzes the transfer of the AMP portion of ATP to flavin mononucleotide (FMN) to produce flavin adenine dinucleotide (FAD) coenzyme. The protein is FAD synthase of Methanococcoides burtonii (strain DSM 6242 / NBRC 107633 / OCM 468 / ACE-M).